A 594-amino-acid polypeptide reads, in one-letter code: uncharacterized protein (594 aa).

The segment at residues 11–38 is a DNA-binding region (zn(2)-C6 fungal-type); the sequence is CELCRRKKIRCNRELPSCQNCIVYQEEC. The helical transmembrane segment at 503 to 523 threads the bilayer; that stretch reads YLWVFLYCPFTPFLVLFSNIV.

The protein resides in the nucleus. The protein localises to the membrane. This is an uncharacterized protein from Schizosaccharomyces pombe (strain 972 / ATCC 24843) (Fission yeast).